The primary structure comprises 1344 residues: Centrosomal P4.1-associated protein (1344 aa).

2 disordered regions span residues 67–123 (SSEE…NNDL) and 187–225 (PGTL…ASNV). Residues 211–225 (SYSNPTQENSCASNV) are compositionally biased toward polar residues. Phosphoserine is present on Ser-248. The tract at residues 257–300 (QEAHVKRNDLKEESPAHPSGEGALPRWEKKMGRSQEGKDVNLQK) is disordered. Basic and acidic residues-rich tracts occupy residues 259 to 271 (AHVK…EESP) and 282 to 297 (RWEK…KDVN). Ser-304 is subject to Phosphoserine. The tract at residues 307–382 (VVNIDERPIK…FTNAKSKFQK (76 aa)) is alpha/beta-tubulin binding. 2 disordered regions span residues 347-407 (QEAE…DRQH) and 425-470 (TVKK…KKRD). A compositionally biased stretch (polar residues) spans 388 to 398 (LASTQSPSEDQ). Position 528 is a phosphoserine (Ser-528). A phosphoserine; by PLK2 mark is found at Ser-577 and Ser-583. Disordered stretches follow at residues 600 to 626 (RLSS…SNCS) and 672 to 735 (TSEI…DTGA). Residues 709 to 720 (VGDRVFSNREDS) are compositionally biased toward basic and acidic residues. The residue at position 748 (Ser-748) is a Phosphoserine. The interval 887-1344 (QPPEFMVCFI…DGNVLMDTEM (458 aa)) is interaction with STIL. The disordered stretch occupies residues 1105-1133 (QGNLSRRIKSAPPRDLGSSDKGQAALPRE).

This sequence belongs to the TCP10 family. As to quaternary structure, forms homodimers. Associates with microtubules plus ends; binds to beta-tubulin subunits exposed on microtubule outer surface at its distal tip; also associates with microtubule lattice. Associated with the gamma-tubulin complex. Interacts with the head domain of EPB41. Interacts with LYST. Interacts with CEP152 (via C-terminus). Interacts with STIL. Forms a complex with STIL and SASS6. In terms of processing, phosphorylation at Ser-577 and Ser-583 by PLK2 is required for procentriole formation and centriole elongation. Phosphorylation by PLK2 oscillates during the cell cycle: it increases at G1/S transition and decreases during the exit from mitosis. Phosphorylation at Ser-583 is also mediated by PLK4 but is not a critical step in PLK4 function in procentriole assembly.

It is found in the cytoplasm. Its subcellular location is the cytoskeleton. It localises to the microtubule organizing center. The protein localises to the centrosome. The protein resides in the centriole. In terms of biological role, plays an important role in cell division and centrosome function by participating in centriole duplication. Inhibits microtubule nucleation from the centrosome. Involved in the regulation of slow processive growth of centriolar microtubules. Acts as microtubule plus-end tracking protein that stabilizes centriolar microtubules and inhibits microtubule polymerization and extension from the distal ends of centrioles. Required for centriole elongation and for STIL-mediated centriole amplification. Required for the recruitment of CEP295 to the proximal end of new-born centrioles at the centriolar microtubule wall during early S phase in a PLK4-dependent manner. May be involved in the control of centriolar-microtubule growth by acting as a regulator of tubulin release. The chain is Centrosomal P4.1-associated protein (Cpap) from Mus musculus (Mouse).